The primary structure comprises 478 residues: Isoeugenol monooxygenase (478 aa).

The Fe cation site is built by H167, H218, H282, and H471.

It belongs to the carotenoid oxygenase family. Monomer. Fe(2+) is required as a cofactor.

The enzyme catalyses (E)-isoeugenol + O2 = vanillin + acetaldehyde. Inhibited by HgCl(2), AgNO(3), CuCl(2), phenylhydrazine, 8-hydroxyquinoline, R-cycloserine and p-chloromercuribenzoic acid. Functionally, involved in isoeugenol degradation. Catalyzes the oxidative cleavage of the side chain double-bond of isoeugenol to form vanillin and acetaldehyde. The sequence is that of Isoeugenol monooxygenase from Pseudomonas putida (Arthrobacter siderocapsulatus).